The sequence spans 161 residues: Photosystem II extrinsic protein V (161 aa).

The signal sequence occupies residues 1 to 25 (MKKFFISVVFIVLLTFTTFINSATA). Residues Cys-61, Cys-64, His-65, and His-116 each contribute to the heme c site.

Belongs to the cytochrome c family. PsbV subfamily. PSII is composed of 1 copy each of membrane proteins PsbA, PsbB, PsbC, PsbD, PsbE, PsbF, PsbH, PsbI, PsbJ, PsbK, PsbL, PsbM, PsbT, PsbX, PsbY, PsbZ, Psb30/Ycf12, peripheral proteins PsbO, CyanoQ (PsbQ), PsbU, PsbV and a large number of cofactors. It forms dimeric complexes. It depends on heme c as a cofactor.

It localises to the cellular thylakoid membrane. Functionally, one of the extrinsic, lumenal subunits of photosystem II (PSII). PSII is a light-driven water plastoquinone oxidoreductase, using light energy to abstract electrons from H(2)O, generating a proton gradient subsequently used for ATP formation. The extrinsic proteins stabilize the structure of photosystem II oxygen-evolving complex (OEC), the ion environment of oxygen evolution and protect the OEC against heat-induced inactivation. Low-potential cytochrome c that plays a role in the OEC of PSII. The protein is Photosystem II extrinsic protein V of Trichodesmium erythraeum (strain IMS101).